Consider the following 321-residue polypeptide: MATH domain and coiled-coil domain-containing protein At3g58260 (321 aa).

In terms of domain architecture, MATH spans 6–135; that stretch reads NNTFTWVIKN…NDEVMVAVAV (130 aa). Residues 232–283 are a coiled coil; the sequence is KLDWLEKKLDELFEKKKEEADKIRMQNIEEELKDLRQKCSSLEALLKKEKTG.

The protein is MATH domain and coiled-coil domain-containing protein At3g58260 of Arabidopsis thaliana (Mouse-ear cress).